The primary structure comprises 354 residues: Peptide chain release factor 1 (354 aa).

The residue at position 230 (glutamine 230) is an N5-methylglutamine.

Belongs to the prokaryotic/mitochondrial release factor family. In terms of processing, methylated by PrmC. Methylation increases the termination efficiency of RF1.

It is found in the cytoplasm. Peptide chain release factor 1 directs the termination of translation in response to the peptide chain termination codons UAG and UAA. The chain is Peptide chain release factor 1 from Novosphingobium aromaticivorans (strain ATCC 700278 / DSM 12444 / CCUG 56034 / CIP 105152 / NBRC 16084 / F199).